Reading from the N-terminus, the 175-residue chain is NADH-quinone oxidoreductase subunit I 1 (175 aa).

2 4Fe-4S ferredoxin-type domains span residues 44 to 74 (LNRWPDGLEKCIGCELCAWACPADAIFVESA) and 90 to 119 (RVYQINYLRCIGCGFCIEACPTRALTMIND). 8 residues coordinate [4Fe-4S] cluster: cysteine 54, cysteine 57, cysteine 60, cysteine 64, cysteine 99, cysteine 102, cysteine 105, and cysteine 109.

It belongs to the complex I 23 kDa subunit family. In terms of assembly, NDH-1 is composed of 14 different subunits. Subunits NuoA, H, J, K, L, M, N constitute the membrane sector of the complex. Requires [4Fe-4S] cluster as cofactor.

The protein localises to the cell membrane. The catalysed reaction is a quinone + NADH + 5 H(+)(in) = a quinol + NAD(+) + 4 H(+)(out). Functionally, NDH-1 shuttles electrons from NADH, via FMN and iron-sulfur (Fe-S) centers, to quinones in the respiratory chain. The immediate electron acceptor for the enzyme in this species is believed to be menaquinone. Couples the redox reaction to proton translocation (for every two electrons transferred, four hydrogen ions are translocated across the cytoplasmic membrane), and thus conserves the redox energy in a proton gradient. This chain is NADH-quinone oxidoreductase subunit I 1, found in Mycolicibacterium paratuberculosis (strain ATCC BAA-968 / K-10) (Mycobacterium paratuberculosis).